The following is a 96-amino-acid chain: Aspartyl/glutamyl-tRNA(Asn/Gln) amidotransferase subunit C (96 aa).

The protein belongs to the GatC family. As to quaternary structure, heterotrimer of A, B and C subunits.

The enzyme catalyses L-glutamyl-tRNA(Gln) + L-glutamine + ATP + H2O = L-glutaminyl-tRNA(Gln) + L-glutamate + ADP + phosphate + H(+). It carries out the reaction L-aspartyl-tRNA(Asn) + L-glutamine + ATP + H2O = L-asparaginyl-tRNA(Asn) + L-glutamate + ADP + phosphate + 2 H(+). Allows the formation of correctly charged Asn-tRNA(Asn) or Gln-tRNA(Gln) through the transamidation of misacylated Asp-tRNA(Asn) or Glu-tRNA(Gln) in organisms which lack either or both of asparaginyl-tRNA or glutaminyl-tRNA synthetases. The reaction takes place in the presence of glutamine and ATP through an activated phospho-Asp-tRNA(Asn) or phospho-Glu-tRNA(Gln). The protein is Aspartyl/glutamyl-tRNA(Asn/Gln) amidotransferase subunit C of Trichormus variabilis (strain ATCC 29413 / PCC 7937) (Anabaena variabilis).